A 215-amino-acid polypeptide reads, in one-letter code: uncharacterized protein (215 aa).

This is an uncharacterized protein from Acanthamoeba polyphaga (Amoeba).